Here is a 151-residue protein sequence, read N- to C-terminus: uncharacterized protein (151 aa).

An N-terminal signal peptide occupies residues 1-32; sequence MEEAEKAKRRSIELLNETRNCAYSSFVALAEA. Residues 45–67 form a helical membrane-spanning segment; sequence AIGFAGGISGSGHICGALWGSIA.

The protein resides in the membrane. This is an uncharacterized protein from Archaeoglobus fulgidus (strain ATCC 49558 / DSM 4304 / JCM 9628 / NBRC 100126 / VC-16).